The chain runs to 853 residues: NADH-quinone oxidoreductase subunit G 2 (853 aa).

The 2Fe-2S ferredoxin-type domain maps to 1–78; the sequence is MIKVTIDEQS…GMVVRTNTPL (78 aa). Residues cysteine 34, cysteine 45, cysteine 48, and cysteine 62 each coordinate [2Fe-2S] cluster. Positions 78–117 constitute a 4Fe-4S His(Cys)3-ligated-type domain; the sequence is LIEETRSSMLDMLLANHPLDCPICDKGGECELQDMVMAYG. 12 residues coordinate [4Fe-4S] cluster: histidine 94, cysteine 98, cysteine 101, cysteine 107, cysteine 148, cysteine 151, cysteine 154, cysteine 198, cysteine 224, cysteine 227, cysteine 231, and cysteine 259. 2 consecutive 4Fe-4S ferredoxin-type domains span residues 139–170 and 179–209; these read PVII…LGTV and TGFE…FPYR. Residues 217–273 enclose the 4Fe-4S Mo/W bis-MGD-type domain; sequence LAETDTICPHCGTGCQLTVGARKGEFMRVRSDWEHGVNRETLCVRGRFGLDFIESRD.

It belongs to the complex I 75 kDa subunit family. [2Fe-2S] cluster is required as a cofactor. [4Fe-4S] cluster serves as cofactor.

It carries out the reaction a quinone + NADH + 5 H(+)(in) = a quinol + NAD(+) + 4 H(+)(out). NDH-1 shuttles electrons from NADH, via FMN and iron-sulfur (Fe-S) centers, to quinones in the respiratory chain. The immediate electron acceptor for the enzyme in this species is believed to be ubiquinone. Couples the redox reaction to proton translocation (for every two electrons transferred, four hydrogen ions are translocated across the cytoplasmic membrane), and thus conserves the redox energy in a proton gradient. The protein is NADH-quinone oxidoreductase subunit G 2 (nuoG2) of Rhizobium meliloti (strain 1021) (Ensifer meliloti).